Consider the following 143-residue polypeptide: MAKKVEAYIKLQVAAGKANPSPPVGPALGQKGVNIMEFCKAFNAQTQGMEPGSPVPVVISVYSDRSFTFTMKTPPASFLLKKAAGLKSGSARPNTQKVGKVTRAQLEEIATIKMADLTAGDMDAAVRTIAGSARAMGLETEGV.

This sequence belongs to the universal ribosomal protein uL11 family. In terms of assembly, part of the ribosomal stalk of the 50S ribosomal subunit. Interacts with L10 and the large rRNA to form the base of the stalk. L10 forms an elongated spine to which L12 dimers bind in a sequential fashion forming a multimeric L10(L12)X complex. Post-translationally, one or more lysine residues are methylated.

Functionally, forms part of the ribosomal stalk which helps the ribosome interact with GTP-bound translation factors. The polypeptide is Large ribosomal subunit protein uL11 (Saccharophagus degradans (strain 2-40 / ATCC 43961 / DSM 17024)).